The primary structure comprises 33 residues: Gastrin (33 aa).

Position 1 is a pyrrolidone carboxylic acid (Q1). The residue at position 28 (Y28) is a Sulfotyrosine. Phenylalanine amide is present on F33.

The protein belongs to the gastrin/cholecystokinin family. Post-translationally, sulfation enhances proteolytic processing, and blocks peptide degradation. Levels of sulfation differ between proteolytically-cleaved gastrins and between tissues.

The protein resides in the secreted. Gastrin stimulates the stomach mucosa to produce and secrete hydrochloric acid and the pancreas to secrete its digestive enzymes. It also stimulates smooth muscle contraction and increases blood circulation and water secretion in the stomach and intestine. In Macropus giganteus (Eastern gray kangaroo), this protein is Gastrin (GAST).